The sequence spans 364 residues: Guanine nucleotide-binding protein alpha-8 subunit (364 aa).

A lipid anchor (N-myristoyl glycine) is attached at G2. A lipid anchor (S-palmitoyl cysteine) is attached at C5. A G-alpha domain is found at K38–Q364. The tract at residues K41–T54 is G1 motif. Residues G46–S53, L186–T192, D211–Q215, N280–D283, and A336 each bind GTP. Mg(2+) contacts are provided by S53 and T192. The G2 motif stretch occupies residues D184–T192. Residues F207–R216 are G3 motif. The G4 motif stretch occupies residues I276–D283. The interval T334–T339 is G5 motif.

This sequence belongs to the G-alpha family. G proteins are composed of 3 units; alpha, beta and gamma. The alpha chain contains the guanine nucleotide binding site.

Functionally, guanine nucleotide-binding proteins (G proteins) are involved as modulators or transducers in various transmembrane signaling systems. The chain is Guanine nucleotide-binding protein alpha-8 subunit (gpa-8) from Caenorhabditis elegans.